Reading from the N-terminus, the 338-residue chain is Phenylalanine--tRNA ligase alpha subunit (338 aa).

E253 provides a ligand contact to Mg(2+).

Belongs to the class-II aminoacyl-tRNA synthetase family. Phe-tRNA synthetase alpha subunit type 1 subfamily. Tetramer of two alpha and two beta subunits. The cofactor is Mg(2+).

The protein localises to the cytoplasm. The catalysed reaction is tRNA(Phe) + L-phenylalanine + ATP = L-phenylalanyl-tRNA(Phe) + AMP + diphosphate + H(+). The sequence is that of Phenylalanine--tRNA ligase alpha subunit from Trichlorobacter lovleyi (strain ATCC BAA-1151 / DSM 17278 / SZ) (Geobacter lovleyi).